The primary structure comprises 353 residues: MTAILERRESTSLWGRFCNWITSTENRLYIGWFGVLMIPTLLTATSVFIIAFIAAPPVDIDGIREPVSGSLLYGNNIISGAIIPTSAAIGLHFYPIWEAASVDEWLYNGGPYELIVLHFLLGVACYMGREWELSFRLGMRPWIAVAYSAPVAAATAVFLIYPIGQGSFSDGMPLGISGTFNFMIVFQAEHNILMHPFHMLGVAGVFGGSLFSAMHGSLVTSSLIRETTENESANEGYRFGQEEETYNIVAAHGYFGRLIFQYASFNNSRSLHFFLAAWPVVGIWFTALGISTMAFNLNGFNFNQSVVDSQGRVINTWADIINRANLGMEVMHERNAHNFPLDLAALEVPSLNG.

Position 2 is an N-acetylthreonine (threonine 2). Threonine 2 carries the post-translational modification Phosphothreonine. A run of 3 helical transmembrane segments spans residues 29-46 (YIGWFGVLMIPTLLTATS), 118-133 (HFLLGVACYMGREWEL), and 142-156 (WIAVAYSAPVAAATA). A chlorophyll a-binding site is contributed by histidine 118. Tyrosine 126 lines the pheophytin a pocket. Positions 170 and 189 each coordinate [CaMn4O5] cluster. Residues 197–218 (FHMLGVAGVFGGSLFSAMHGSL) form a helical membrane-spanning segment. Histidine 198 is a binding site for chlorophyll a. A quinone is bound by residues histidine 215 and 264-265 (SF). Position 215 (histidine 215) interacts with Fe cation. Histidine 272 serves as a coordination point for Fe cation. A helical transmembrane segment spans residues 274–288 (FLAAWPVVGIWFTAL). Positions 332, 333, 342, and 344 each coordinate [CaMn4O5] cluster. The propeptide occupies 345–353 (ALEVPSLNG).

This sequence belongs to the reaction center PufL/M/PsbA/D family. In terms of assembly, PSII is composed of 1 copy each of membrane proteins PsbA, PsbB, PsbC, PsbD, PsbE, PsbF, PsbH, PsbI, PsbJ, PsbK, PsbL, PsbM, PsbT, PsbX, PsbY, PsbZ, Psb30/Ycf12, at least 3 peripheral proteins of the oxygen-evolving complex and a large number of cofactors. It forms dimeric complexes. The cofactor is The D1/D2 heterodimer binds P680, chlorophylls that are the primary electron donor of PSII, and subsequent electron acceptors. It shares a non-heme iron and each subunit binds pheophytin, quinone, additional chlorophylls, carotenoids and lipids. D1 provides most of the ligands for the Mn4-Ca-O5 cluster of the oxygen-evolving complex (OEC). There is also a Cl(-1) ion associated with D1 and D2, which is required for oxygen evolution. The PSII complex binds additional chlorophylls, carotenoids and specific lipids.. Post-translationally, tyr-161 forms a radical intermediate that is referred to as redox-active TyrZ, YZ or Y-Z. In terms of processing, C-terminally processed by CTPA; processing is essential to allow assembly of the oxygen-evolving complex and thus photosynthetic growth.

It localises to the plastid. The protein localises to the chloroplast thylakoid membrane. The catalysed reaction is 2 a plastoquinone + 4 hnu + 2 H2O = 2 a plastoquinol + O2. In terms of biological role, photosystem II (PSII) is a light-driven water:plastoquinone oxidoreductase that uses light energy to abstract electrons from H(2)O, generating O(2) and a proton gradient subsequently used for ATP formation. It consists of a core antenna complex that captures photons, and an electron transfer chain that converts photonic excitation into a charge separation. The D1/D2 (PsbA/PsbD) reaction center heterodimer binds P680, the primary electron donor of PSII as well as several subsequent electron acceptors. This is Photosystem II protein D1 from Oryza nivara (Indian wild rice).